Consider the following 675-residue polypeptide: Myosin-binding protein 3 (675 aa).

The chain crosses the membrane as a helical span at residues 17–37 (ITVILVYAFLEWLLMFFIFLN). Disordered stretches follow at residues 225–274 (LRSI…EEET) and 286–315 (SKNF…TPTS). Positions 238-251 (AKSRVSEDEQRNDD) are enriched in basic and acidic residues. The region spanning 355–453 (RTIERLRETV…QLQRELEVYR (99 aa)) is the GTD-binding domain. A compositionally biased stretch (acidic residues) spans 474–496 (CEADDDDKEEENREEDNSSEMDV). Disordered regions lie at residues 474-497 (CEAD…MDVD), 542-565 (DKES…GHGG), and 582-605 (AENE…GSDS). The span at 596–605 (SDEKNFGSDS) shows a compositional bias: basic and acidic residues. A coiled-coil region spans residues 605 to 633 (SEKLEIIKQVDSVYERLQELETDGEFLKN).

Interacts with myosin XI-K.

The protein resides in the membrane. In terms of biological role, membrane-anchored myosin receptors that define a distinct, plant-specific transport vesicle compartment. In Arabidopsis thaliana (Mouse-ear cress), this protein is Myosin-binding protein 3.